We begin with the raw amino-acid sequence, 273 residues long: Undecaprenyl-diphosphatase (273 aa).

The next 6 helical transmembrane spans lie at 46 to 63, 83 to 103, 109 to 129, 184 to 204, 218 to 238, and 249 to 269; these read LFEV…CWEY, FVLN…LAGK, LFNS…ILWV, ATEF…AYDL, AFGI…RGLL, and FAWY…YGLV.

It belongs to the UppP family.

It is found in the cell inner membrane. It carries out the reaction di-trans,octa-cis-undecaprenyl diphosphate + H2O = di-trans,octa-cis-undecaprenyl phosphate + phosphate + H(+). Its function is as follows. Catalyzes the dephosphorylation of undecaprenyl diphosphate (UPP). Confers resistance to bacitracin. In Methylococcus capsulatus (strain ATCC 33009 / NCIMB 11132 / Bath), this protein is Undecaprenyl-diphosphatase.